The sequence spans 170 residues: uncharacterized protein (170 aa).

An N-terminal signal peptide occupies residues 1-26 (MLKKKWMVGLLAGCLAAGGFSYNAFA).

This is an uncharacterized protein from Bacillus subtilis (strain 168).